A 495-amino-acid chain; its full sequence is Rho GTPase-activating protein 19 (495 aa).

Residues 98-304 (MSLKRKEKGV…FMIKHSQKLF (207 aa)) form the Rho-GAP domain. 2 disordered regions span residues 327–362 (KDDL…ETQQ) and 393–495 (KHPS…SSSL). Composition is skewed to basic and acidic residues over residues 350 to 362 (SRLD…ETQQ), 433 to 452 (QERK…KENV), and 470 to 481 (KSLEGQKEESCR).

Functionally, GTPase activator for the Rho-type GTPases by converting them to an inactive GDP-bound state. This Gallus gallus (Chicken) protein is Rho GTPase-activating protein 19 (ARHGAP19).